The chain runs to 958 residues: Voltage-gated inwardly rectifying potassium channel KCNH6 (958 aa).

Residues 1 to 261 (MPVRRGHVAP…YSPFKAVWDW (261 aa)) lie on the Cytoplasmic side of the membrane. One can recognise a PAS domain in the interval 41–70 (IIYCNDGFCELFGYSRVEVMQQPCTCDFLT). One can recognise a PAC domain in the interval 92–144 (CKVDILYYRKDASSFRCLVDVVPVKNEDGAVIMFILNFEDLAQLLAKCSSRSL). Residues 262-282 (LILLLVIYTAVFTPYSAAFLL) traverse the membrane as a helical segment. At 283–298 (SDQDESRRGACSYTCS) the chain is on the extracellular side. Residues 299-319 (PLTVVDLIVDIMFVVDIVINF) form a helical membrane-spanning segment. Residues 320 to 340 (RTTYVNTNDEVVSHPRRIAVH) lie on the Cytoplasmic side of the membrane. The chain crosses the membrane as a helical span at residues 341–361 (YFKGWFLIDMVAAIPFDLLIF). At 362–370 (RTGSDETTT) the chain is on the extracellular side. A helical; Voltage-sensor membrane pass occupies residues 371-391 (LIGLLKTARLLRLVRVARKLD). Residues 392–398 (RYSEYGA) lie on the Cytoplasmic side of the membrane. Residues 399 to 419 (AVLFLLMCTFALIAHWLACIW) traverse the membrane as a helical segment. Over 420–463 (YAIGNVERPYLEHKIGWLDSLGVQLGKRYNGSDPASGPSVQDKY) the chain is Extracellular. An N-linked (GlcNAc...) (complex) asparagine glycan is attached at Asn-449. An intramembrane region (pore-forming) is located at residues 464 to 484 (VTALYFTFSSLTSVGFGNVSP). The Selectivity filter signature appears at 476–481 (SVGFGN). At 485-490 (NTNSEK) the chain is on the extracellular side. The chain crosses the membrane as a helical span at residues 491–511 (VFSICVMLIGSLMYASIFGNV). Topologically, residues 512 to 958 (SAIIQRLYSG…DPGFAGSWGH (447 aa)) are cytoplasmic. The cNMP-binding domain stretch occupies residues 594-694 (AFSGAGKGCL…IQRADLLEVL (101 aa)). 2 disordered regions span residues 720 to 751 (GLHS…PPLS) and 845 to 910 (TTSP…PPLA). The span at 724-745 (SPRQAPGSQDHQGFFLSDNQSD) shows a compositional bias: polar residues.

Belongs to the potassium channel family. H (Eag) (TC 1.A.1.20) subfamily. Kv11.2/KCNH6 sub-subfamily. In terms of assembly, the potassium channel is probably composed of a homo- or heterotetrameric complex of pore-forming alpha subunits that can associate only within their subfamily. As to expression, expressed in prolactin-secreting adenomas.

It is found in the cell membrane. The enzyme catalyses K(+)(in) = K(+)(out). Pore-forming (alpha) subunit of voltage-gated inwardly rectifying potassium channel. Characterized by unusual gating kinetics by producing relatively small outward currents during membrane depolarization and large inward currents during subsequent repolarization which reflect a rapid inactivation during depolarization and quick recovery from inactivation but slow deactivation (closing) during repolarization. Activates even more slowly than KCNH2. In Homo sapiens (Human), this protein is Voltage-gated inwardly rectifying potassium channel KCNH6.